Consider the following 145-residue polypeptide: Regulator of sigma D (145 aa).

Belongs to the Rsd/AlgQ family. As to quaternary structure, interacts with RpoD.

It localises to the cytoplasm. Functionally, binds RpoD and negatively regulates RpoD-mediated transcription activation by preventing the interaction between the primary sigma factor RpoD with the catalytic core of the RNA polymerase and with promoter DNA. May be involved in replacement of the RNA polymerase sigma subunit from RpoD to RpoS during the transition from exponential growth to the stationary phase. In Sodalis glossinidius (strain morsitans), this protein is Regulator of sigma D.